The primary structure comprises 529 residues: N5-hydroxyornithine acetylase sidL (529 aa).

Disordered stretches follow at residues 59 to 95 (ASVN…VRPF) and 239 to 258 (SPWP…SPVA). H462 is a binding site for substrate. E498 (proton acceptor) is an active-site residue.

It belongs to the lysine N-acyltransferase mbtK family.

The protein localises to the cytoplasm. It localises to the cytosol. It functions in the pathway siderophore biosynthesis. Functionally, acyltransferase; part of the gene cluster that mediates the biosynthesis of at least 11 siderophores, including beauverichelin A, dimerumic acid (DA), Na-dimethyl coprogen (NADC), eleutherazine B, ferricrocin (FC), fusarinine A, fusarinine C (FsC), metachelin A, mevalonolactone, rhodotorulic acid (RA) and tenellin. This cocktail of siderophores for iron metabolism is essential for virulence, and more specifically for the fungal virulence in penetrating through the host cuticle. Siderophore synthesis is also involved in conidial germination under iron-deficient conditions. SIDL contributes to partial production of ferricrocin under iron-limiting conditions via the acetylation of N(5)-hydroxyornithine. The polypeptide is N5-hydroxyornithine acetylase sidL (Beauveria bassiana (strain ARSEF 2860) (White muscardine disease fungus)).